The primary structure comprises 201 residues: Holliday junction branch migration complex subunit RuvA (201 aa).

The domain I stretch occupies residues 1 to 64 (MIGRLHGKII…EDAHLLFGFA (64 aa)). The interval 65–143 (QKQDRTLFRE…GVAQSDFFEE (79 aa)) is domain II. A flexible linker region spans residues 144 to 154 (HSVETIVATHS). The tract at residues 154–201 (SHDPADEARDALVALGYKLADAEKMIKKVNKAGATSEQLIREALKASL) is domain III.

Belongs to the RuvA family. In terms of assembly, homotetramer. Forms an RuvA(8)-RuvB(12)-Holliday junction (HJ) complex. HJ DNA is sandwiched between 2 RuvA tetramers; dsDNA enters through RuvA and exits via RuvB. An RuvB hexamer assembles on each DNA strand where it exits the tetramer. Each RuvB hexamer is contacted by two RuvA subunits (via domain III) on 2 adjacent RuvB subunits; this complex drives branch migration. In the full resolvosome a probable DNA-RuvA(4)-RuvB(12)-RuvC(2) complex forms which resolves the HJ.

Its subcellular location is the cytoplasm. Its function is as follows. The RuvA-RuvB-RuvC complex processes Holliday junction (HJ) DNA during genetic recombination and DNA repair, while the RuvA-RuvB complex plays an important role in the rescue of blocked DNA replication forks via replication fork reversal (RFR). RuvA specifically binds to HJ cruciform DNA, conferring on it an open structure. The RuvB hexamer acts as an ATP-dependent pump, pulling dsDNA into and through the RuvAB complex. HJ branch migration allows RuvC to scan DNA until it finds its consensus sequence, where it cleaves and resolves the cruciform DNA. This is Holliday junction branch migration complex subunit RuvA from Actinobacillus pleuropneumoniae serotype 7 (strain AP76).